A 354-amino-acid polypeptide reads, in one-letter code: Zinc finger protein 346 (354 aa).

4 Matrin-type zinc fingers span residues 34-64 (TQCK…KVRR), 95-125 (KCCP…NLRL), 165-195 (KFCK…QETK), and 232-262 (FSCD…QLMS). Cys36, Cys39, His52, His58, Cys97, Cys100, His113, and His119 together coordinate Zn(2+). The interval 263–343 (MTPLSKEGPP…QPYVREDMMG (81 aa)) is disordered. Low complexity-rich tracts occupy residues 270 to 289 (GPPA…TGGA) and 310 to 323 (GPSS…MGGL). A compositionally biased stretch (pro residues) spans 324–333 (MPPPYPPPHS).

It localises to the nucleus. It is found in the cytoplasm. Its function is as follows. Binds preferentially to dsRNA, but also to RNA-DNA hybrids. This is Zinc finger protein 346 from Xenopus tropicalis (Western clawed frog).